The following is a 396-amino-acid chain: Flap endonuclease 1 (396 aa).

Residues 1 to 105 (MGIHGLTKLL…DQLAQRTERR (105 aa)) form an N-domain region. Residue Asp34 coordinates Mg(2+). DNA is bound at residue Arg71. Asp87, Glu159, Glu161, Asp180, and Asp182 together coordinate Mg(2+). Positions 123-254 (AIEKYSKRSV…VRALQMIKKH (132 aa)) are I-domain. Glu159 lines the DNA pocket. Positions 232 and 234 each coordinate DNA. Mg(2+) is bound at residue Asp234. The interval 338 to 346 (NQGRLESFF) is interaction with PCNA. The segment at 341 to 396 (RLESFFTSLPKPATADKAKPKEDDKKRKAGAAAGGKDAKGGAAAKKGKFGVGGGKK) is disordered. Basic and acidic residues predominate over residues 354–366 (TADKAKPKEDDKK). Low complexity predominate over residues 370–384 (GAAAGGKDAKGGAAA).

This sequence belongs to the XPG/RAD2 endonuclease family. FEN1 subfamily. As to quaternary structure, interacts with PCNA. Three molecules of FEN1 bind to one PCNA trimer with each molecule binding to one PCNA monomer. PCNA stimulates the nuclease activity without altering cleavage specificity. Requires Mg(2+) as cofactor. Post-translationally, phosphorylated. Phosphorylation upon DNA damage induces relocalization to the nuclear plasma.

It localises to the nucleus. Its subcellular location is the nucleolus. The protein localises to the nucleoplasm. It is found in the mitochondrion. Functionally, structure-specific nuclease with 5'-flap endonuclease and 5'-3' exonuclease activities involved in DNA replication and repair. During DNA replication, cleaves the 5'-overhanging flap structure that is generated by displacement synthesis when DNA polymerase encounters the 5'-end of a downstream Okazaki fragment. It enters the flap from the 5'-end and then tracks to cleave the flap base, leaving a nick for ligation. Also involved in the long patch base excision repair (LP-BER) pathway, by cleaving within the apurinic/apyrimidinic (AP) site-terminated flap. Acts as a genome stabilization factor that prevents flaps from equilibrating into structures that lead to duplications and deletions. Also possesses 5'-3' exonuclease activity on nicked or gapped double-stranded DNA, and exhibits RNase H activity. Also involved in replication and repair of rDNA and in repairing mitochondrial DNA. The sequence is that of Flap endonuclease 1 from Chlamydomonas reinhardtii (Chlamydomonas smithii).